Here is a 385-residue protein sequence, read N- to C-terminus: Galactokinase (385 aa).

A substrate-binding site is contributed by Glu-34–Asp-37. Ser-124–Ser-130 is an ATP binding site. Mg(2+)-binding residues include Ser-130 and Glu-162. Asp-174 serves as the catalytic Proton acceptor. A substrate-binding site is contributed by Tyr-223.

Belongs to the GHMP kinase family. GalK subfamily.

It localises to the cytoplasm. It carries out the reaction alpha-D-galactose + ATP = alpha-D-galactose 1-phosphate + ADP + H(+). It participates in carbohydrate metabolism; galactose metabolism. Catalyzes the transfer of the gamma-phosphate of ATP to D-galactose to form alpha-D-galactose-1-phosphate (Gal-1-P). The polypeptide is Galactokinase (Mannheimia succiniciproducens (strain KCTC 0769BP / MBEL55E)).